Consider the following 165-residue polypeptide: Natriuretic peptide Na-NP (165 aa).

A signal peptide spans 1–25 (MVGLSRLAGGGLLLVLALLPLALDG). A propeptide spanning residues 26 to 83 (KPAPEALHKPPTGLRTSLAALRILGYLRPDSKQSRAARDRMLHPEQQVGGGGDSRPLQ) is cleaved from the precursor. The segment covering 56–68 (SKQSRAARDRMLH) has biased composition (basic and acidic residues). 2 disordered regions span residues 56-100 (SKQS…QKID) and 135-165 (PDSK…SRVI). The cysteines at positions 94 and 110 are disulfide-linked. A propeptide spanning residues 129-165 (ILEYLRPDSKRSRATRDRMLHPEQQVGGGGGGGSRVI) is cleaved from the precursor. Residues 135–149 (PDSKRSRATRDRMLH) are compositionally biased toward basic and acidic residues. Gly residues predominate over residues 154–165 (VGGGGGGGSRVI).

This sequence belongs to the natriuretic peptide family. In terms of tissue distribution, expressed by the venom gland.

It localises to the secreted. Functionally, natriuretic peptide that dose-dependently induces the rapid relaxation of rat aortic strips phenylephrine-precontracted. Acts by stimulating cGMP production in a dose-dependent manner (by probably activating NPR1 and/or NPR2). May also show potent hypotensive effects. This Naja atra (Chinese cobra) protein is Natriuretic peptide Na-NP.